The following is a 132-amino-acid chain: UPF0251 protein PTH_0588 (132 aa).

This sequence belongs to the UPF0251 family.

The sequence is that of UPF0251 protein PTH_0588 from Pelotomaculum thermopropionicum (strain DSM 13744 / JCM 10971 / SI).